The primary structure comprises 520 residues: Transactivator/viroplasmin protein (520 aa).

The interval 486 to 520 is disordered; it reads VQDASADSGPKDGPPPTRSIVEKEDVPTTSSKQVD.

This sequence belongs to the caulimoviridae viroplasmin family.

It localises to the host cytoplasm. Functionally, enhances the ribosomal termination-reinitiation event leading to the translation of major open reading frames on the polycistronic viral RNAs. The protein is Transactivator/viroplasmin protein of Cauliflower mosaic virus (strain BBC) (CaMV).